A 390-amino-acid chain; its full sequence is MATLNPRDVVIVDGVRSAMGKSKNGMFRNVRADSLSAELVRALVARNQFDVNEVEDLIWGCVNQTLEQGMNIGRNIGLLAGLPKTVAGQTVNRLCGSSMQAIHTAAAQIATNQGDIFIIGGVEHMGHVGMMHGIDLNPEASKHYAKASNMMGLTAEMLGRMNGITREEQDAFGVESHRRAWAATQEGRFKNEIIGVEGHDANGFKILCDIDEVIRPDANLEAFKALKPVFDPKGGSVTAATSSALSDGASAMLLMSAERAQALGLKPRAVIRSMAVAGCDAAIMGYGPVPATQKALKRAGLSIADIQTVELNEAFAAQGLSVLKGLGLYDKQDIVNLNGGAIALGHPLGCSGARITTTLLNVMEQQDTQIGLATMCIGLGQGIATVIERV.

The active-site Acyl-thioester intermediate is C95. Active-site proton acceptor residues include H346 and C376.

This sequence belongs to the thiolase-like superfamily. Thiolase family. As to quaternary structure, heterotetramer of two alpha chains (FadB) and two beta chains (FadA).

The protein resides in the cytoplasm. The catalysed reaction is an acyl-CoA + acetyl-CoA = a 3-oxoacyl-CoA + CoA. The protein operates within lipid metabolism; fatty acid beta-oxidation. Functionally, catalyzes the final step of fatty acid oxidation in which acetyl-CoA is released and the CoA ester of a fatty acid two carbons shorter is formed. This Acinetobacter baumannii (strain AB307-0294) protein is 3-ketoacyl-CoA thiolase.